The sequence spans 276 residues: Light-independent protochlorophyllide reductase iron-sulfur ATP-binding protein (276 aa).

ATP-binding positions include 12 to 17 (GIGKST) and lysine 41. Serine 16 lines the Mg(2+) pocket. 2 residues coordinate [4Fe-4S] cluster: cysteine 97 and cysteine 131. 182–183 (NR) contacts ATP.

The protein belongs to the NifH/BchL/ChlL family. In terms of assembly, homodimer. Protochlorophyllide reductase is composed of three subunits; BchL, BchN and BchB. Requires [4Fe-4S] cluster as cofactor.

It catalyses the reaction chlorophyllide a + oxidized 2[4Fe-4S]-[ferredoxin] + 2 ADP + 2 phosphate = protochlorophyllide a + reduced 2[4Fe-4S]-[ferredoxin] + 2 ATP + 2 H2O. It participates in porphyrin-containing compound metabolism; bacteriochlorophyll biosynthesis (light-independent). Functionally, component of the dark-operative protochlorophyllide reductase (DPOR) that uses Mg-ATP and reduced ferredoxin to reduce ring D of protochlorophyllide (Pchlide) to form chlorophyllide a (Chlide). This reaction is light-independent. The L component serves as a unique electron donor to the NB-component of the complex, and binds Mg-ATP. In Chlorobium luteolum (strain DSM 273 / BCRC 81028 / 2530) (Pelodictyon luteolum), this protein is Light-independent protochlorophyllide reductase iron-sulfur ATP-binding protein.